We begin with the raw amino-acid sequence, 297 residues long: XIAP-associated factor 1 (297 aa).

The TRAF-type zinc finger occupies 22-99 (LHEAHCLMYL…QLAVRLNKVD (78 aa)). Residues 178-255 (AVTPSPVGKP…NGKLRASSPV (78 aa)) form a disordered region. Basic and acidic residues predominate over residues 202–212 (QTSKAEKDVRP). Residues 229–245 (RQAPRGTNKTTNLSLKS) are compositionally biased toward polar residues.

Interacts with BIRC1, BIRC2, BIRC3, BIRC4, BIRC7 and BIRC8. Part of an complex consisting of BIRC4, XAF1 and BIRC5; the complex formation requires IFN-beta stimulation. Interacts with RNF114, the interaction increases XAF1 stability and proapoptotic effects, and may regulate IFN signaling.

It localises to the cytoplasm. The protein localises to the nucleus. Its subcellular location is the mitochondrion. Its function is as follows. Seems to function as a negative regulator of members of the IAP (inhibitor of apoptosis protein) family. Inhibits anti-caspase activity of BIRC4. Induces cleavage and inactivation of BIRC4 independent of caspase activation. Mediates TNF-alpha-induced apoptosis and is involved in apoptosis in trophoblast cells. May inhibit BIRC4 indirectly by activating the mitochondrial apoptosis pathway. After translocation to mitochondria, promotes translocation of BAX to mitochondria and cytochrome c release from mitochondria. Seems to promote the redistribution of BIRC4 from the cytoplasm to the nucleus, probably independent of BIRC4 inactivation which seems to occur in the cytoplasm. The BIRC4-XAF1 complex mediates down-regulation of BIRC5/survivin; the process requires the E3 ligase activity of BIRC4. Seems to be involved in cellular sensitivity to the proapoptotic actions of TRAIL. May be a tumor suppressor by mediating apoptosis resistance of cancer cells. The sequence is that of XIAP-associated factor 1 (XAF1) from Bos taurus (Bovine).